The following is a 200-amino-acid chain: Elongation factor Ts (200 aa).

The tract at residues 82 to 85 (TDFV) is involved in Mg(2+) ion dislocation from EF-Tu.

It belongs to the EF-Ts family.

The protein resides in the cytoplasm. Its function is as follows. Associates with the EF-Tu.GDP complex and induces the exchange of GDP to GTP. It remains bound to the aminoacyl-tRNA.EF-Tu.GTP complex up to the GTP hydrolysis stage on the ribosome. The sequence is that of Elongation factor Ts from Solidesulfovibrio magneticus (strain ATCC 700980 / DSM 13731 / RS-1) (Desulfovibrio magneticus).